The sequence spans 437 residues: Eukaryotic peptide chain release factor subunit 1 (437 aa).

The NIKS motif; plays an important role in translational termination motif lies at 61–64 (NIKS).

The protein belongs to the eukaryotic release factor 1 family. Component of the eRF1-eRF3-GTP ternary complex, composed of ETF1/ERF1 and eRF3 (GSPT1/ERF3A or GSPT2/ERF3B) and GTP.

It localises to the cytoplasm. Component of the eRF1-eRF3-GTP ternary complex, a ternary complex that mediates translation termination in response to the termination codons. The eRF1-eRF3-GTP complex binds to a stop codon in the ribosomal A-site. ETF1/ERF1 is responsible for stop codon recognition and inducing hydrolysis of peptidyl-tRNA. Following GTP hydrolysis, eRF3 (GSPT1/ERF3A or GSPT2/ERF3B) dissociates, permitting ETF1/eRF1 to accommodate fully in the A-site, followed by hydrolysis of peptidyl-tRNA. The chain is Eukaryotic peptide chain release factor subunit 1 (etf1) from Xenopus tropicalis (Western clawed frog).